We begin with the raw amino-acid sequence, 132 residues long: Fatty acid-binding protein, intestinal (132 aa).

N-acetylalanine is present on A2. 2 residues coordinate hexadecanoate: W83 and R107. Tetradecanoate-binding residues include W83 and R107.

Belongs to the calycin superfamily. Fatty-acid binding protein (FABP) family.

It localises to the cytoplasm. FABPs are thought to play a role in the intracellular transport of long-chain fatty acids and their acyl-CoA esters. FABP2 is probably involved in triglyceride-rich lipoprotein synthesis. Binds saturated long-chain fatty acids with a high affinity, but binds with a lower affinity to unsaturated long-chain fatty acids. FABP2 may also help maintain energy homeostasis by functioning as a lipid sensor. This Sus scrofa (Pig) protein is Fatty acid-binding protein, intestinal (FABP2).